The sequence spans 263 residues: Small ribosomal subunit protein bS1c (263 aa).

S1 motif domains are found at residues 27–96 (GDIV…LSIR), 114–178 (DSLL…LSHR), and 192–260 (GNII…LSMK).

The protein belongs to the bacterial ribosomal protein bS1 family.

The protein localises to the plastid. It is found in the chloroplast. The polypeptide is Small ribosomal subunit protein bS1c (rps1) (Porphyra purpurea (Red seaweed)).